A 172-amino-acid chain; its full sequence is Shikimate kinase (172 aa).

11–16 lines the ATP pocket; sequence GAGKST. Residue S15 coordinates Mg(2+). The substrate site is built by D33, R57, and G79. Position 117 (R117) interacts with ATP. R136 contributes to the substrate binding site. Position 153 (R153) interacts with ATP.

Belongs to the shikimate kinase family. As to quaternary structure, monomer. Mg(2+) serves as cofactor.

The protein localises to the cytoplasm. The catalysed reaction is shikimate + ATP = 3-phosphoshikimate + ADP + H(+). It participates in metabolic intermediate biosynthesis; chorismate biosynthesis; chorismate from D-erythrose 4-phosphate and phosphoenolpyruvate: step 5/7. Functionally, catalyzes the specific phosphorylation of the 3-hydroxyl group of shikimic acid using ATP as a cosubstrate. The polypeptide is Shikimate kinase (Pseudomonas syringae pv. syringae (strain B728a)).